A 507-amino-acid chain; its full sequence is Putative F-box/LRR-repeat protein At4g00320 (507 aa).

In terms of domain architecture, F-box spans 12-60 (RDGISGLPDAMICHILSFLPTKVAASTTVLAKRWKPLLAFMPNLDFDES). LRR repeat units follow at residues 135–163 (RGFG…KIQF), 187–212 (YVKM…LLMN), 214–240 (IWKE…KFSR), 317–348 (ILYL…TIRT), and 349–374 (GVHI…VFEG).

This Arabidopsis thaliana (Mouse-ear cress) protein is Putative F-box/LRR-repeat protein At4g00320.